The following is a 417-amino-acid chain: Serine/threonine-protein kinase SBK1 (417 aa).

The Protein kinase domain occupies 53-318; that stretch reads YELVRELGKG…VFRFLKHELT (266 aa). ATP-binding positions include 59–67 and Lys-82; that span reads LGKGTYGKV. Asp-174 serves as the catalytic Proton acceptor. The interval 321-405 is disordered; the sequence is LRRRPSHRAR…TDGRTDKSKG (85 aa). Over residues 363–382 the composition is skewed to pro residues; it reads PSPPSVGPVVPVPVPVPVPV.

This sequence belongs to the protein kinase superfamily. Ser/Thr protein kinase family.

Its subcellular location is the cytoplasm. It carries out the reaction L-seryl-[protein] + ATP = O-phospho-L-seryl-[protein] + ADP + H(+). It catalyses the reaction L-threonyl-[protein] + ATP = O-phospho-L-threonyl-[protein] + ADP + H(+). May be involved in signal-transduction pathways related to the control of brain development. This chain is Serine/threonine-protein kinase SBK1 (Sbk1), found in Mus musculus (Mouse).